The following is a 149-amino-acid chain: uncharacterized protein (149 aa).

This sequence to Rhizobium NGR234A y4oM.

This is an uncharacterized protein from Sinorhizobium fredii (strain NBRC 101917 / NGR234).